A 227-amino-acid polypeptide reads, in one-letter code: Large ribosomal subunit protein uL3 (227 aa).

A disordered region spans residues 144 to 166 (RRGPMAHGSKNHRLPGSTGPGTT).

Belongs to the universal ribosomal protein uL3 family. Part of the 50S ribosomal subunit. Forms a cluster with proteins L14 and L19.

Its function is as follows. One of the primary rRNA binding proteins, it binds directly near the 3'-end of the 23S rRNA, where it nucleates assembly of the 50S subunit. In Trichodesmium erythraeum (strain IMS101), this protein is Large ribosomal subunit protein uL3.